Consider the following 296-residue polypeptide: Tubulin polyglutamylase complex subunit 2 (296 aa).

A disordered region spans residues 257-296 (KILIPKKKGPVQPVSGQKGPGPLAPPTSKPSAGCGNPVRK).

As to quaternary structure, part of the neuronal tubulin polyglutamylase complex which contains TPGS1, TPGS2, TTLL1, LRRC49 and NICN1. Interacts with CSTPP1 and LRRC49.

The protein localises to the cytoplasm. Its subcellular location is the cytoskeleton. It localises to the microtubule organizing center. The protein resides in the centrosome. It is found in the centriolar satellite. In terms of biological role, subunit of the tubulin polyglutamylase complex (TPGC). The complex mediates cilia and flagella polyglutamylation which is essential for their biogenesis and motility. This chain is Tubulin polyglutamylase complex subunit 2 (Tpgs2), found in Rattus norvegicus (Rat).